The following is a 455-amino-acid chain: MLSRSRCASRAFSRSLSAFQKGNCPLVRRSLPGISLCQGPGYPDSRKTVINSSNIFSVRFFRTTAVCKDDVITVKTPAFAESVTEGDVRWEKAVGDTVAEDEVVCEIETDKTSVQVPSPANGVIEALLVPDGGKVEGGTPLFTLRKTGAAPAKAKPAAAPAAAAPKAEPTVSAVPPPPAAPIPTQMPPVPSPSQPLTSKPVSAVKPTAAPPRAEAGAGVGLRSEHREKMNRMRQRIAQRLKEAQNTCAMLTTFNEIDMSNIQEMRARHKDAFLKKHNLKLGFMSAFVKASAFALQEQPVVNAVIDDATKEVVYRDYIDISVAVATPRGLVVPVIRNVETMNYADIERTISELGEKARKNELAIEDMDGGTFTISNGGVFGSLFGTPIINPPQSAILGMHAIVDRPVVIGGKVEVRPMMYVALTYDHRLIDGREAVTFLRKIKAAVEDPRVLLLDL.

The N-terminal 68 residues, 1 to 68 (MLSRSRCASR…RFFRTTAVCK (68 aa)), are a transit peptide targeting the mitochondrion. Positions 71–145 (VITVKTPAFA…EGGTPLFTLR (75 aa)) constitute a Lipoyl-binding domain. S82 is modified (phosphoserine). K111 carries the N6-lipoyllysine modification. Residue K155 is modified to N6-acetyllysine. The segment covering 155 to 173 (KPAAAPAAAAPKAEPTVSA) has biased composition (low complexity). Residues 155–220 (KPAAAPAAAA…PRAEAGAGVG (66 aa)) are disordered. Residues 174 to 193 (VPPPPAAPIPTQMPPVPSPS) show a composition bias toward pro residues. N6-acetyllysine is present on residues K269, K274, K275, K279, and K309. Residues H426 and D430 contribute to the active site.

The protein belongs to the 2-oxoacid dehydrogenase family. As to quaternary structure, the 2-oxoglutarate dehydrogenase complex is composed of OGDH (2-oxoglutarate dehydrogenase; E1), DLST (dihydrolipoamide succinyltransferase; E2), DLD (dihydrolipoamide dehydrogenase; E3) and the assembly factor KGD4. It contains multiple copies of the three enzymatic components (E1, E2 and E3). In the nucleus, the 2-oxoglutarate dehydrogenase complex associates with KAT2A. Interacts with ABHD11; this interaction maintains the functional lipoylation of the 2-oxoglutarate dehydrogenase complex. The cofactor is (R)-lipoate.

Its subcellular location is the mitochondrion matrix. The protein localises to the nucleus. It carries out the reaction N(6)-[(R)-dihydrolipoyl]-L-lysyl-[protein] + succinyl-CoA = N(6)-[(R)-S(8)-succinyldihydrolipoyl]-L-lysyl-[protein] + CoA. The protein operates within amino-acid degradation; L-lysine degradation via saccharopine pathway; glutaryl-CoA from L-lysine: step 6/6. It participates in carbohydrate metabolism; tricarboxylic acid cycle. In terms of biological role, dihydrolipoamide succinyltransferase (E2) component of the 2-oxoglutarate dehydrogenase complex. The 2-oxoglutarate dehydrogenase complex catalyzes the overall conversion of 2-oxoglutarate to succinyl-CoA and CO(2). The 2-oxoglutarate dehydrogenase complex is mainly active in the mitochondrion. A fraction of the 2-oxoglutarate dehydrogenase complex also localizes in the nucleus and is required for lysine succinylation of histones: associates with KAT2A on chromatin and provides succinyl-CoA to histone succinyltransferase KAT2A. The chain is Dihydrolipoyllysine-residue succinyltransferase component of 2-oxoglutarate dehydrogenase complex, mitochondrial from Bos taurus (Bovine).